We begin with the raw amino-acid sequence, 69 residues long: MFPKLGMGELVVILLIVVILFGASKLPQLGAGLGQGIRSFKKSFSGEDEEKPSTPGATSSDEASKAKQA.

The helical transmembrane segment at 1 to 21 threads the bilayer; that stretch reads MFPKLGMGELVVILLIVVILF. A disordered region spans residues 43-69; it reads SFSGEDEEKPSTPGATSSDEASKAKQA.

The protein belongs to the TatA/E family. As to quaternary structure, the Tat system comprises two distinct complexes: a TatABC complex, containing multiple copies of TatA, TatB and TatC subunits, and a separate TatA complex, containing only TatA subunits. Substrates initially bind to the TatABC complex, which probably triggers association of the separate TatA complex to form the active translocon.

It is found in the cell inner membrane. Functionally, part of the twin-arginine translocation (Tat) system that transports large folded proteins containing a characteristic twin-arginine motif in their signal peptide across membranes. TatA could form the protein-conducting channel of the Tat system. In Anaeromyxobacter sp. (strain Fw109-5), this protein is Sec-independent protein translocase protein TatA.